A 134-amino-acid polypeptide reads, in one-letter code: Secreted RxLR effector protein 1 (134 aa).

Residues 1 to 22 (MFCRSPLVAVILLVLATHIVLA) form the signal peptide. Residues 32-60 (SETVPSDSSQTTRKSTRRTTSVDNKRRLR) form a disordered region. A compositionally biased stretch (low complexity) spans 37–52 (SDSSQTTRKSTRRTTS). The RxLR-dEER motif lies at 57-79 (RRLRQQIMGKDGPVVNDVHAEER).

Belongs to the RxLR effector family.

It is found in the secreted. Its subcellular location is the host nucleus. Functionally, effector that acts as a broad suppressor of cell death to interrupt plant immunity. Inhibits cell death induced by cell death-inducing proteins, including the PAMP elicitor INF1 from P.infestans. The protein is Secreted RxLR effector protein 1 of Plasmopara viticola (Downy mildew of grapevine).